Consider the following 185-residue polypeptide: Ribosome-recycling factor (185 aa).

The protein belongs to the RRF family.

Its subcellular location is the cytoplasm. Responsible for the release of ribosomes from messenger RNA at the termination of protein biosynthesis. May increase the efficiency of translation by recycling ribosomes from one round of translation to another. This is Ribosome-recycling factor from Campylobacter jejuni (strain RM1221).